We begin with the raw amino-acid sequence, 360 residues long: S-adenosylmethionine:tRNA ribosyltransferase-isomerase (360 aa).

Belongs to the QueA family. Monomer.

It localises to the cytoplasm. The enzyme catalyses 7-aminomethyl-7-carbaguanosine(34) in tRNA + S-adenosyl-L-methionine = epoxyqueuosine(34) in tRNA + adenine + L-methionine + 2 H(+). It participates in tRNA modification; tRNA-queuosine biosynthesis. Transfers and isomerizes the ribose moiety from AdoMet to the 7-aminomethyl group of 7-deazaguanine (preQ1-tRNA) to give epoxyqueuosine (oQ-tRNA). This chain is S-adenosylmethionine:tRNA ribosyltransferase-isomerase, found in Burkholderia pseudomallei (strain 1106a).